The sequence spans 733 residues: Alpha,alpha-trehalose-phosphate synthase [UDP-forming] A (733 aa).

This sequence in the N-terminal section; belongs to the glycosyltransferase 20 family. The protein in the C-terminal section; belongs to the trehalose phosphatase family.

It catalyses the reaction D-glucose 6-phosphate + UDP-alpha-D-glucose = alpha,alpha-trehalose 6-phosphate + UDP + H(+). Its function is as follows. Synthesizes trehalose 6-phosphate, the precursor for the production of trehalose, the main carbohydrate storage reserve of the dormant spore. Trehalose accumulates in both prestalk and prespore cells and then is rapidly metabolized during terminal differentiation of stalk cells, while being stored in spores, where it serves as the principal energy and carbon source for germination. This Dictyostelium discoideum (Social amoeba) protein is Alpha,alpha-trehalose-phosphate synthase [UDP-forming] A (tpsA).